The sequence spans 126 residues: Flagellar assembly factor FliW (126 aa).

This sequence belongs to the FliW family. In terms of assembly, interacts with translational regulator CsrA and flagellin(s).

The protein localises to the cytoplasm. Acts as an anti-CsrA protein, binds CsrA and prevents it from repressing translation of its target genes, one of which is flagellin. Binds to flagellin and participates in the assembly of the flagellum. The chain is Flagellar assembly factor FliW from Sulfurimonas denitrificans (strain ATCC 33889 / DSM 1251) (Thiomicrospira denitrificans (strain ATCC 33889 / DSM 1251)).